Consider the following 409-residue polypeptide: Glucan endo-1,6-beta-glucosidase B (409 aa).

The first 16 residues, 1–16 (MKFILPLFTSLPVALA), serve as a signal peptide directing secretion. Asn35 carries an N-linked (GlcNAc...) asparagine glycan. Glu228 acts as the Proton donor in catalysis. Glu330 serves as the catalytic Nucleophile.

Belongs to the glycosyl hydrolase 5 (cellulase A) family.

The protein localises to the secreted. It carries out the reaction Random hydrolysis of (1-&gt;6)-linkages in (1-&gt;6)-beta-D-glucans.. Functionally, beta-glucanases participate in the metabolism of beta-glucan, the main structural component of the cell wall. Acts on lutean, pustulan and 1,6-oligo-beta-D-glucosides. In Emericella nidulans (strain FGSC A4 / ATCC 38163 / CBS 112.46 / NRRL 194 / M139) (Aspergillus nidulans), this protein is Glucan endo-1,6-beta-glucosidase B (exgB).